The sequence spans 64 residues: Large ribosomal subunit protein bL28 (64 aa).

The interval 1–26 (MARRDQLTGKGPLSGNTRSHAMNHSK) is disordered.

This sequence belongs to the bacterial ribosomal protein bL28 family.

This chain is Large ribosomal subunit protein bL28, found in Ureaplasma urealyticum serovar 10 (strain ATCC 33699 / Western).